A 337-amino-acid polypeptide reads, in one-letter code: ATP-dependent 6-phosphofructokinase (337 aa).

Gly-11 is an ATP binding site. 21 to 25 contributes to the ADP binding site; the sequence is RAVVR. ATP is bound by residues 72 to 73 and 102 to 105; these read RY and GDGS. Asp-103 contributes to the Mg(2+) binding site. 125–127 provides a ligand contact to substrate; that stretch reads TID. Asp-127 functions as the Proton acceptor in the catalytic mechanism. ADP is bound at residue Arg-154. Substrate contacts are provided by residues Arg-162 and 169-171; that span reads MGR. ADP is bound by residues 185–187, Lys-212, and 214–216; these read GAD and KNH. Substrate contacts are provided by residues Glu-223, Arg-245, and 251-254; that span reads HILR.

The protein belongs to the phosphofructokinase type A (PFKA) family. ATP-dependent PFK group I subfamily. Prokaryotic clade 'B1' sub-subfamily. In terms of assembly, homotetramer. Requires Mg(2+) as cofactor.

Its subcellular location is the cytoplasm. The catalysed reaction is beta-D-fructose 6-phosphate + ATP = beta-D-fructose 1,6-bisphosphate + ADP + H(+). Its pathway is carbohydrate degradation; glycolysis; D-glyceraldehyde 3-phosphate and glycerone phosphate from D-glucose: step 3/4. Allosterically activated by ADP and other diphosphonucleosides, and allosterically inhibited by phosphoenolpyruvate. In terms of biological role, catalyzes the phosphorylation of D-fructose 6-phosphate to fructose 1,6-bisphosphate by ATP, the first committing step of glycolysis. The sequence is that of ATP-dependent 6-phosphofructokinase from Streptococcus pyogenes serotype M4 (strain MGAS10750).